The sequence spans 450 residues: UDP-N-acetylmuramoylalanine--D-glutamate ligase (450 aa).

Position 118–124 (Gly118–Thr124) interacts with ATP.

This sequence belongs to the MurCDEF family.

The protein localises to the cytoplasm. It carries out the reaction UDP-N-acetyl-alpha-D-muramoyl-L-alanine + D-glutamate + ATP = UDP-N-acetyl-alpha-D-muramoyl-L-alanyl-D-glutamate + ADP + phosphate + H(+). The protein operates within cell wall biogenesis; peptidoglycan biosynthesis. Functionally, cell wall formation. Catalyzes the addition of glutamate to the nucleotide precursor UDP-N-acetylmuramoyl-L-alanine (UMA). The polypeptide is UDP-N-acetylmuramoylalanine--D-glutamate ligase (Halalkalibacterium halodurans (strain ATCC BAA-125 / DSM 18197 / FERM 7344 / JCM 9153 / C-125) (Bacillus halodurans)).